The chain runs to 279 residues: MRAEAAAHANHRSTALGSSFYLGMRTLPPVQREAIFQIYSFCRQVDDIADSDEPREHRLAALQQWRDHIDALYQCVPPPRLKDYLASVTTFGLKREDFLAVVDGMEMDVLQDIRAPKMATLDLYCDRVASAVGRMSVRVFGLSEEDGIALAHHLGRALQLTNILRDIDEDAGLGRLYIPRESLDHAGITSSDPHKVIADKALPKACAPLAQRAMMHFAESDEIMNCNPRRIVRAPTIMSKCYRAILDLLLIRGFAAPREPVRVTNLTKRAILFRYALML.

This sequence belongs to the phytoene/squalene synthase family. HpnD subfamily.

The enzyme catalyses 2 (2E,6E)-farnesyl diphosphate = presqualene diphosphate + diphosphate. Its pathway is secondary metabolite biosynthesis; hopanoid biosynthesis. Functionally, involved in the biosynthesis of the hopanoid precursor squalene (SQ) from farnesyl diphosphate (FPP). Catalyzes the first step, the formation of presqualene diphosphate (PSPP) from two molecules of FPP. This is Presqualene diphosphate synthase from Sinorhizobium fredii (strain NBRC 101917 / NGR234).